Here is a 218-residue protein sequence, read N- to C-terminus: tRNA (guanine-N(7)-)-methyltransferase (218 aa).

The interval 1 to 26 is disordered; sequence MRLKNKPWANELVEEHPESALDRPDP. Residues 13–26 are compositionally biased toward basic and acidic residues; that stretch reads VEEHPESALDRPDP. Residues Glu45, Glu70, Asp97, and Asp119 each contribute to the S-adenosyl-L-methionine site. The active site involves Asp119. Lys123 lines the substrate pocket. Positions 125–130 are interaction with RNA; sequence RHEKRR. Residues Asp155 and 195–198 contribute to the substrate site; that span reads TEYE.

Belongs to the class I-like SAM-binding methyltransferase superfamily. TrmB family.

It catalyses the reaction guanosine(46) in tRNA + S-adenosyl-L-methionine = N(7)-methylguanosine(46) in tRNA + S-adenosyl-L-homocysteine. The protein operates within tRNA modification; N(7)-methylguanine-tRNA biosynthesis. Catalyzes the formation of N(7)-methylguanine at position 46 (m7G46) in tRNA. This Lactobacillus delbrueckii subsp. bulgaricus (strain ATCC 11842 / DSM 20081 / BCRC 10696 / JCM 1002 / NBRC 13953 / NCIMB 11778 / NCTC 12712 / WDCM 00102 / Lb 14) protein is tRNA (guanine-N(7)-)-methyltransferase.